The sequence spans 312 residues: Malate dehydrogenase (312 aa).

NAD(+) is bound by residues 7-13 (GAAGGIG) and Asp-34. Arg-81 and Arg-87 together coordinate substrate. Residues Asn-94 and 117-119 (ITN) each bind NAD(+). Residues Asn-119 and Arg-153 each coordinate substrate. Residue His-177 is the Proton acceptor of the active site. Met-227 lines the NAD(+) pocket.

The protein belongs to the LDH/MDH superfamily. MDH type 1 family. In terms of assembly, homodimer.

It carries out the reaction (S)-malate + NAD(+) = oxaloacetate + NADH + H(+). In terms of biological role, catalyzes the reversible oxidation of malate to oxaloacetate. This is Malate dehydrogenase from Salmonella gallinarum (strain 287/91 / NCTC 13346).